A 517-amino-acid chain; its full sequence is Beclin-1-like protein (517 aa).

The tract at residues Leu76 to Lys106 is disordered. Residues Ser95–Gly105 show a composition bias toward polar residues. Positions Cys172–Tyr266 form a coiled coil.

It belongs to the beclin family. As to quaternary structure, component of a phosphatidylinositol 3-kinase (PI3K) complex composed of ATG6, SH3P2 and FREE1. Interacts with SINAT1, SINAT2, SINAT5, SINAT6, TRAF1A and TRAF1B. Interacts with TUBB8/TUB8. Component of a complex made of VPS38/USL1 and PI3K main subunits such as VPS15, ATG6/VPS30 and VPS34. Binds directly to VPS38/USL1. In terms of processing, ubiquitinated. The interaction with SINAT1 or SINAT2, and the presence of TRAF1A/MUSE14 and TRAF1B/MUSE13, mediates its proteasome-dependent degradation. Highly expressed in mature pollen grains. Expressed in roots, leaves, stems, flowers and siliques.

The protein localises to the cytoplasm. Its subcellular location is the cytoskeleton. Functionally, required for normal plant development. Required for pollen germination. Required for autophagic activity. Required to limit the pathogen-associated cell death response. May be involved in vacuolar protein sorting. Binds to microtubules. May facilitate efficient recruitment of other ATG proteins to assemble scaffolds for autophagosome biogenesis. The chain is Beclin-1-like protein from Arabidopsis thaliana (Mouse-ear cress).